A 366-amino-acid chain; its full sequence is Peptide chain release factor 1 (366 aa).

Gln-239 is subject to N5-methylglutamine.

The protein belongs to the prokaryotic/mitochondrial release factor family. Post-translationally, methylated by PrmC. Methylation increases the termination efficiency of RF1.

It localises to the cytoplasm. Peptide chain release factor 1 directs the termination of translation in response to the peptide chain termination codons UAG and UAA. In Baumannia cicadellinicola subsp. Homalodisca coagulata, this protein is Peptide chain release factor 1.